We begin with the raw amino-acid sequence, 898 residues long: Chloride channel protein 2 (898 aa).

At Ala-2 the chain carries N-acetylalanine. Topologically, residues 2 to 87 (AAAAAEEGME…RCHKFLVSRV (86 aa)) are cytoplasmic. The essential for channel gating by both voltage and cell volume stretch occupies residues 16-34 (QYEQTLMYGRYTQDLGAFA). Thr-20 carries the phosphothreonine modification. The modulates channel gating by both voltage and cell volume stretch occupies residues 36 to 49 (EEAARIRLGGPEPW). A run of 2 helical transmembrane segments spans residues 88-121 (GEDW…AQQW) and 130-155 (ILLQ…TQIL). A Selectivity filter part_1 motif is present at residues 161–165 (GSGIP). Ser-162 contacts chloride. The segment at residues 164 to 171 (IPEMKTIL) is an intramembrane region (helical). 2 helical membrane-spanning segments follow: residues 180–198 (LTLK…ALGS) and 205–223 (EGPF…SKFL). The short motif at 203 to 207 (GKEGP) is the Selectivity filter part_2 element. 2 consecutive intramembrane regions (helical) follow at residues 239 to 251 (MLAA…VGCC) and 255 to 263 (PIGGVLFSI). The next 5 membrane-spanning stretches (helical) occupy residues 275 to 295 (YWRG…LAVW), 321 to 349 (LPAF…VQVM), 358 to 377 (FLMR…ISTL), 429 to 449 (ANVF…SALA), and 457 to 480 (GAFM…MAAW). Residues 457-461 (GAFMP) carry the Selectivity filter part_3 motif. Phe-459 lines the chloride pocket. Positions 497–511 (GGYAVVGAAALAGAV) form an intramembrane region, helical. The segment at residues 512–513 (TH) is an intramembrane region (note=Loop between two helices). The segment at residues 514–525 (TVSTAVIVFELT) is an intramembrane region (helical). The segment at residues 526–530 (GQIAH) is an intramembrane region (note=Loop between two helices). Residues 531–548 (ILPVMIAVILANAVAQSL) traverse the membrane as a helical segment. Residues 549–898 (QPSLYDSIIR…SPSDSDDKCQ (350 aa)) lie on the Cytoplasmic side of the membrane. Residue Tyr-553 coordinates chloride. The CBS 1 domain maps to 584–642 (MVRDVPHVALSCTFRDLRLALHRTKGRMLALVESPESMILLGSIERSQVVALLGAQLSP). 2 disordered regions span residues 643–672 (ARRR…PEAS) and 686–717 (AARG…TGSA). A compositionally biased stretch (polar residues) spans 705 to 717 (VTRNLGESPTGSA). Phosphoserine is present on residues Ser-712 and Ser-758. A CBS 2 domain is found at 790-850 (IDPAPFQLVE…GSVTAQGVKV (61 aa)). Residues 812–813 (LL) carry the Basolateral membrane sorting motif. The interval 856–898 (SFRDSATSSSDTETTEVHALWGPHSRHGLPREGSPSDSDDKCQ) is disordered.

The protein belongs to the chloride channel (TC 2.A.49) family. ClC-2/CLCN2 subfamily. As to quaternary structure, homodimer. Interacts with auxiliary subunit HEPACAM. Phosphorylated. Activated by dephosphorylation. Ubiquitously expressed. Moderately expressed in aortic and coronary vascular smooth muscle cells and expressed at a low level in aortic endothelial cells. Expressed in the adrenal gland, predominantly in the zona glomerulosa. Expressed in white mater perivascular astrocytes and ependymal cells (at protein level).

The protein resides in the cell membrane. It localises to the basolateral cell membrane. It is found in the cell projection. Its subcellular location is the dendritic spine membrane. The protein localises to the axon. It catalyses the reaction chloride(in) = chloride(out). The enzyme catalyses thiocyanate(in) = thiocyanate(out). The catalysed reaction is bromide(in) = bromide(out). It carries out the reaction nitrate(in) = nitrate(out). It catalyses the reaction iodide(out) = iodide(in). Common gate kinetics are down-regulated by intracellular ATP. Inhibited by AK-42, a derivative of meclofenamate. Inhibited by Cd(2+). Inhibited by Zn(2+) and PKC activation. Inhibited at acidic pH. CCLN2:HEPACAM channel conductance is up-regulated upon hypo-osmolarity. In terms of biological role, voltage-gated and osmosensitive chloride channel. Forms a homodimeric channel where each subunit has its own ion conduction pathway. Conducts double-barreled currents controlled by two types of gates, two fast glutamate gates that control each subunit independently and a slow common gate that opens and shuts off both subunits simultaneously. Displays inward rectification currents activated upon membrane hyperpolarization and extracellular hypotonicity. Contributes to chloride conductance involved in neuron excitability. In hippocampal neurons, generates a significant part of resting membrane conductance and provides an additional chloride efflux pathway to prevent chloride accumulation in dendrites upon GABA receptor activation. In glia, associates with the auxiliary subunit HEPACAM/GlialCAM at astrocytic processes and myelinated fiber tracts where it may regulate transcellular chloride flux buffering extracellular chloride and potassium concentrations. Regulates aldosterone production in adrenal glands. The opening of CLCN2 channels at hyperpolarized membrane potentials in the glomerulosa causes cell membrane depolarization, activation of voltage-gated calcium channels and increased expression of aldosterone synthase, the rate-limiting enzyme for aldosterone biosynthesis. Contributes to chloride conductance in retinal pigment epithelium involved in phagocytosis of shed photoreceptor outer segments and photoreceptor renewal. Conducts chloride currents at the basolateral membrane of epithelial cells with a role in chloride reabsorption rather than secretion. Permeable to small monovalent anions with chloride &gt; thiocyanate &gt; bromide &gt; nitrate &gt; iodide ion selectivity. This chain is Chloride channel protein 2, found in Homo sapiens (Human).